Reading from the N-terminus, the 317-residue chain is MAELACFCYPHLENDSYKFIPFNNLAIKCMLTAKVDRKDQDKFYNSIIYGIAPPPQFKKRYNTNDNSRGMNYETSMFNKVAVLICEALNSIKVTQSDVANVLSRVVSVRHLENLVLRRENHQDVLFHSKELLLKSVLIAIGHSKEIETTATAEGGEIVFQNAAFTMWKLTYLEHKLMPILDQNFIEYKITVNEDKPISESHVKELIAELRWQYNKFAVITHGKGHYRVVKYSSVANHADRVYATFKSNNKNGNVLEFNLLDQRIIWQNWYAFTSSMKQGNTLDICKKLLFQKMKRESNPFKGLSTDRKMDEVSQIGI.

Residues 107–109, lysine 188, and 221–223 each bind ATP; these read SVR and HGK. Positions 205-241 are RNA-binding; that stretch reads LIAELRWQYNKFAVITHGKGHYRVVKYSSVANHADRV. The active-site For NTPase and RTPase activities is histidine 225. Residue arginine 227 coordinates ATP.

It belongs to the rotavirus NSP2 family. Homooctamer. Interacts with VP1; this interaction is weak. Interacts with NSP5; this interaction leads to up-regulation of NSP5 phosphorylation and formation of viral factories. Interacts with host DCP1A, DCP1B, DDX6, EDC4 and EIF2S1/eIF2-alpha; these interactions are probably part of the sequestration of some host SGs and PBs proteins in viral factories. Mg(2+) is required as a cofactor.

It localises to the host cytoplasm. In terms of biological role, participates in replication and packaging of the viral genome. Plays a crucial role, together with NSP5, in the formation of virus factories (viroplasms), which are large inclusions in the host cytoplasm where replication intermediates are assembled and viral RNA replication takes place. Displays ssRNA binding, NTPase, RNA triphosphatase (RTPase) and ATP-independent helix-unwinding activities. The unwinding activity may prepare and organize plus-strand RNAs for packaging and replication by removing interfering secondary structures. The RTPase activity plays a role in the removal of the gamma-phosphate from the rotavirus RNA minus strands of dsRNA genome segments. Participates in the selective exclusion of host proteins from stress granules (SG) and P bodies (PB). Also participates in the sequestration of these remodeled organelles in viral factories. The polypeptide is Non-structural protein 2 (Rotavirus A (strain RVA/Cow/United Kingdom/UK/1975/G6P7[5]) (RV-A)).